A 314-amino-acid polypeptide reads, in one-letter code: Olfactory receptor 1 (314 aa).

Residues 1 to 29 (MTERNQTVISQFLLLGLPIPPEHQHVFYA) lie on the Extracellular side of the membrane. N-linked (GlcNAc...) asparagine glycosylation occurs at N5. Residues 30–50 (LFLSMYLTTVLGNLIIIILIL) traverse the membrane as a helical segment. Topologically, residues 51–59 (LDSHLHTPM) are cytoplasmic. A helical transmembrane segment spans residues 60 to 81 (YLFLSNLSFSDLCFSSVTMPKL). The Extracellular portion of the chain corresponds to 82–97 (LQNMQSQVPSIPYAGC). The cysteines at positions 97 and 179 are disulfide-linked. The helical transmembrane segment at 98 to 118 (LSQIYFFLFFGDLGNFLLVAM) threads the bilayer. Residues 119–143 (AYDRYVAICFPLHYMSIMSPKLCVS) lie on the Cytoplasmic side of the membrane. A helical transmembrane segment spans residues 144–164 (LVVLSWVLTTFHAMLHTLLMA). The Extracellular portion of the chain corresponds to 165 to 196 (RLSFCEDNVIPHFFCDMSALLKLACSDTRVNE). The helical transmembrane segment at 197–217 (VVIFIVVSLFLVLPFALIIMS) threads the bilayer. Over 218 to 240 (YVRIVSSILKVPSSQGIYKAFST) the chain is Cytoplasmic. A helical transmembrane segment spans residues 241 to 261 (CGSHLSVVSLFYGTVIGLYLC). Residues 262–271 (PSSNNSTVKE) lie on the Extracellular side of the membrane. Residues N265 and N266 are each glycosylated (N-linked (GlcNAc...) asparagine). The helical transmembrane segment at 272–292 (TVMSLMYTVVTPMLNPFIYSL) threads the bilayer. Residues 293-314 (RNRDIKGAMERIFCKRKIQLNL) lie on the Cytoplasmic side of the membrane.

The protein belongs to the G-protein coupled receptor 1 family. In terms of tissue distribution, olfactory epithelium.

The protein resides in the cell membrane. In terms of biological role, odorant receptor. Activated by a lily-derived aldehyde as well as other odorants. May signal through an inositol 1,4,5-trisphosphate (IP3) second messenger system. The polypeptide is Olfactory receptor 1 (Rattus norvegicus (Rat)).